Reading from the N-terminus, the 345-residue chain is RNA pseudouridine synthase 1 (345 aa).

The active site involves Asp134.

This sequence belongs to the pseudouridine synthase RluA family.

The catalysed reaction is a uridine in RNA = a pseudouridine in RNA. This Oryza sativa subsp. japonica (Rice) protein is RNA pseudouridine synthase 1.